Consider the following 428-residue polypeptide: Enolase (428 aa).

Residue Gln-162 participates in (2R)-2-phosphoglycerate binding. Glu-204 functions as the Proton donor in the catalytic mechanism. Positions 241, 282, and 309 each coordinate Mg(2+). Residues Lys-334, Arg-363, Ser-364, and Lys-385 each coordinate (2R)-2-phosphoglycerate. Lys-334 serves as the catalytic Proton acceptor.

Belongs to the enolase family. Requires Mg(2+) as cofactor.

It is found in the cytoplasm. The protein resides in the secreted. The protein localises to the cell surface. The enzyme catalyses (2R)-2-phosphoglycerate = phosphoenolpyruvate + H2O. Its pathway is carbohydrate degradation; glycolysis; pyruvate from D-glyceraldehyde 3-phosphate: step 4/5. Its function is as follows. Catalyzes the reversible conversion of 2-phosphoglycerate (2-PG) into phosphoenolpyruvate (PEP). It is essential for the degradation of carbohydrates via glycolysis. The protein is Enolase of Mycobacterium ulcerans (strain Agy99).